We begin with the raw amino-acid sequence, 307 residues long: 4-hydroxy-3-methylbut-2-enyl diphosphate reductase (307 aa).

C12 lines the [4Fe-4S] cluster pocket. (2E)-4-hydroxy-3-methylbut-2-enyl diphosphate contacts are provided by H41 and H74. 2 residues coordinate dimethylallyl diphosphate: H41 and H74. H41 and H74 together coordinate isopentenyl diphosphate. C96 contacts [4Fe-4S] cluster. H124 serves as a coordination point for (2E)-4-hydroxy-3-methylbut-2-enyl diphosphate. H124 provides a ligand contact to dimethylallyl diphosphate. Residue H124 coordinates isopentenyl diphosphate. Catalysis depends on E126, which acts as the Proton donor. T165 lines the (2E)-4-hydroxy-3-methylbut-2-enyl diphosphate pocket. C195 contacts [4Fe-4S] cluster. 4 residues coordinate (2E)-4-hydroxy-3-methylbut-2-enyl diphosphate: S223, S224, N225, and S267. Residues S223, S224, N225, and S267 each coordinate dimethylallyl diphosphate. The isopentenyl diphosphate site is built by S223, S224, N225, and S267.

The protein belongs to the IspH family. Requires [4Fe-4S] cluster as cofactor.

The enzyme catalyses isopentenyl diphosphate + 2 oxidized [2Fe-2S]-[ferredoxin] + H2O = (2E)-4-hydroxy-3-methylbut-2-enyl diphosphate + 2 reduced [2Fe-2S]-[ferredoxin] + 2 H(+). It carries out the reaction dimethylallyl diphosphate + 2 oxidized [2Fe-2S]-[ferredoxin] + H2O = (2E)-4-hydroxy-3-methylbut-2-enyl diphosphate + 2 reduced [2Fe-2S]-[ferredoxin] + 2 H(+). Its pathway is isoprenoid biosynthesis; dimethylallyl diphosphate biosynthesis; dimethylallyl diphosphate from (2E)-4-hydroxy-3-methylbutenyl diphosphate: step 1/1. The protein operates within isoprenoid biosynthesis; isopentenyl diphosphate biosynthesis via DXP pathway; isopentenyl diphosphate from 1-deoxy-D-xylulose 5-phosphate: step 6/6. In terms of biological role, catalyzes the conversion of 1-hydroxy-2-methyl-2-(E)-butenyl 4-diphosphate (HMBPP) into a mixture of isopentenyl diphosphate (IPP) and dimethylallyl diphosphate (DMAPP). Acts in the terminal step of the DOXP/MEP pathway for isoprenoid precursor biosynthesis. This Magnetococcus marinus (strain ATCC BAA-1437 / JCM 17883 / MC-1) protein is 4-hydroxy-3-methylbut-2-enyl diphosphate reductase.